The chain runs to 317 residues: Olfactory receptor 10AD1 (317 aa).

Residues 1–25 lie on the Extracellular side of the membrane; that stretch reads MLRNGSIVTEFILVGFQQSSTSTRA. An N-linked (GlcNAc...) asparagine glycan is attached at N4. Residues 26-46 traverse the membrane as a helical segment; that stretch reads LLFALFLALYSLTMAMNGLII. Over 47–55 the chain is Cytoplasmic; that stretch reads FITSWTDPK. A helical transmembrane segment spans residues 56 to 76; the sequence is LNSPMYFFLGHLSLLDVCFIT. Topologically, residues 77–100 are extracellular; it reads TTIPQMLIHLVVRDHIVSFVCCMT. The cysteines at positions 98 and 190 are disulfide-linked. Residues 101-121 form a helical membrane-spanning segment; sequence QMYFVFCVGVAECILLAFMAY. Topologically, residues 122 to 140 are cytoplasmic; the sequence is DRYVAICYPLNYVPIISQK. The helical transmembrane segment at 141-161 threads the bilayer; that stretch reads VCVRLVGTAWFFGLINGIFLE. The Extracellular portion of the chain corresponds to 162–198; it reads YISFREPFRRDNHIESFFCEAPIVIGLSCGDPQFSLW. Residues 199–218 traverse the membrane as a helical segment; sequence AIFADAIVVILSPMVLTVTS. At 219 to 238 the chain is on the cytoplasmic side; it reads YVHILATILSKASSSGRGKT. The chain crosses the membrane as a helical span at residues 239–259; sequence FSTCASHLTVVIFLYTSAMFS. The Extracellular segment spans residues 260 to 272; sequence YMNPHSTHGPDKD. The chain crosses the membrane as a helical span at residues 273–293; that stretch reads KPFSLLYTIITPMCNPIIYSF. Over 294 to 317 the chain is Cytoplasmic; the sequence is RNKEIKEAMVRALGRTRLAQPQSV.

Belongs to the G-protein coupled receptor 1 family.

It localises to the cell membrane. Functionally, odorant receptor. This Homo sapiens (Human) protein is Olfactory receptor 10AD1 (OR10AD1).